Consider the following 445-residue polypeptide: Phosphoglucosamine mutase (445 aa).

Ser99 functions as the Phosphoserine intermediate in the catalytic mechanism. The Mg(2+) site is built by Ser99, Asp242, Asp244, and Asp246. Ser99 carries the phosphoserine modification.

Belongs to the phosphohexose mutase family. Requires Mg(2+) as cofactor. Activated by phosphorylation.

It carries out the reaction alpha-D-glucosamine 1-phosphate = D-glucosamine 6-phosphate. Functionally, catalyzes the conversion of glucosamine-6-phosphate to glucosamine-1-phosphate. This is Phosphoglucosamine mutase from Campylobacter jejuni subsp. jejuni serotype O:23/36 (strain 81-176).